A 190-amino-acid chain; its full sequence is Crossover junction endodeoxyribonuclease RuvC (190 aa).

Active-site residues include D7, E67, and D140. Positions 7, 67, and 140 each coordinate Mg(2+).

This sequence belongs to the RuvC family. In terms of assembly, homodimer which binds Holliday junction (HJ) DNA. The HJ becomes 2-fold symmetrical on binding to RuvC with unstacked arms; it has a different conformation from HJ DNA in complex with RuvA. In the full resolvosome a probable DNA-RuvA(4)-RuvB(12)-RuvC(2) complex forms which resolves the HJ. Mg(2+) is required as a cofactor.

It localises to the cytoplasm. It carries out the reaction Endonucleolytic cleavage at a junction such as a reciprocal single-stranded crossover between two homologous DNA duplexes (Holliday junction).. The RuvA-RuvB-RuvC complex processes Holliday junction (HJ) DNA during genetic recombination and DNA repair. Endonuclease that resolves HJ intermediates. Cleaves cruciform DNA by making single-stranded nicks across the HJ at symmetrical positions within the homologous arms, yielding a 5'-phosphate and a 3'-hydroxyl group; requires a central core of homology in the junction. The consensus cleavage sequence is 5'-(A/T)TT(C/G)-3'. Cleavage occurs on the 3'-side of the TT dinucleotide at the point of strand exchange. HJ branch migration catalyzed by RuvA-RuvB allows RuvC to scan DNA until it finds its consensus sequence, where it cleaves and resolves the cruciform DNA. The protein is Crossover junction endodeoxyribonuclease RuvC of Fusobacterium nucleatum subsp. nucleatum (strain ATCC 25586 / DSM 15643 / BCRC 10681 / CIP 101130 / JCM 8532 / KCTC 2640 / LMG 13131 / VPI 4355).